A 459-amino-acid polypeptide reads, in one-letter code: MGSQATTYHMAMYPWFGVGHLTGFFRLANKLAGKGHRISFLIPKNTQSKLESFNLHPHLISFVPIVVPSIPGLPPGAETTSDVPFPSTHLLMEAMDKTQNDIEIILKDLKVDVVFYDFTHWLPSLARKIGIKSVFYSTISPLMHGYALSPERRVVGKQLTEADMMKAPASFPDPSIKLHAHEARGFTARTVMKFGGDITFFDRIFTAVSESDGLAYSTCREIEGQFCDYIETQFQKPVLLAGPALPVPSKSTMEQKWSDWLGKFKEGSVIYCAFGSECTLRKDKFQELLWGLELTGMPFFAALKPPFETESVEAAIPEELKEKIQGRGIVHGEWVQQQLFLQHPSVGCFVSHCGWASLSEALVNDCQIVLLPQVGDQIINARIMSVSLKVGVEVEKGEEDGVFSRESVCKAVKAVMDEKSEIGREVRGNHDKLRGFLMNADLDSKYMDSFNQKLQDLLG.

The Proton acceptor role is filled by histidine 20. Histidine 20 provides a ligand contact to an anthocyanidin. Aspartate 117 (charge relay) is an active-site residue. Residues threonine 138, valine 335, glutamine 337, histidine 352, tryptophan 355, serine 357, and glutamate 360 each coordinate UDP-alpha-D-glucose. Glycine 375 contacts an anthocyanidin. The UDP-alpha-D-glucose site is built by aspartate 376 and glutamine 377.

Belongs to the UDP-glycosyltransferase family.

The catalysed reaction is an anthocyanidin 3-O-beta-D-glucoside + UDP-alpha-D-glucose = an anthocyanidin 3-O-sophoroside + UDP + 2 H(+). Its pathway is pigment biosynthesis; anthocyanin biosynthesis. Its function is as follows. Glycosyltransferase that mediates the glucosylation of anthocyanidin 3-O-glucosides to yield anthocyanidin 3-O-sophorosides. 3-O-sophoroside derivatives are required for the color of flowers. The protein is Anthocyanidin 3-O-glucoside 2''-O-glucosyltransferase (3GGT) of Ipomoea purpurea (Common morning glory).